The following is a 203-amino-acid chain: Protein ILM1 (203 aa).

The Cytoplasmic portion of the chain corresponds to 1–3; the sequence is MAQ. The chain crosses the membrane as a helical span at residues 4–24; the sequence is ALNSTNIAFFRVAFLFTIAFF. At 25-58 the chain is on the lumenal side; it reads CLKNVNSILQNTYFIVLTQAMNLPQLTLSRYSGQ. The helical transmembrane segment at 59 to 79 threads the bilayer; it reads LGLFALLFTLNGVHDLIPLLE. The Cytoplasmic segment spans residues 80–92; the sequence is NNVKYFQSVVPVR. A helical membrane pass occupies residues 93-113; the sequence is LLIFFILTSISYLWESNFYVH. Residue Asn-114 is a topological domain, lumenal. The helical transmembrane segment at 115–135 threads the bilayer; that stretch reads NSVFIYCFAEVWINFLLYNAI. Topologically, residues 136 to 203 are cytoplasmic; sequence REEKNEEFKR…KGNDDSDAKK (68 aa). A compositionally biased stretch (acidic residues) spans 175–187; the sequence is INDEENDDEDGKD. Positions 175–203 are disordered; it reads INDEENDDEDGKDNDDNNEKGNDDSDAKK. Positions 188-203 are enriched in basic and acidic residues; sequence NDDNNEKGNDDSDAKK.

It belongs to the ILM1 family.

The protein resides in the endoplasmic reticulum membrane. This is Protein ILM1 (ILM1) from Saccharomyces cerevisiae (strain ATCC 204508 / S288c) (Baker's yeast).